A 145-amino-acid polypeptide reads, in one-letter code: Zinc finger C2H2 protein ECU06_1150 (145 aa).

A C2H2-type 1; atypical zinc finger spans residues 35-57; sequence KDCARYGEAQASKHALLAHARRH. The segment at 63–85 adopts a C2H2-type 2 zinc-finger fold; it reads FECHLCGKDYTRSDPLKKHLLRH.

The protein is Zinc finger C2H2 protein ECU06_1150 of Encephalitozoon cuniculi (strain GB-M1) (Microsporidian parasite).